Here is a 207-residue protein sequence, read N- to C-terminus: NADH-ubiquinone oxidoreductase chain 6 (207 aa).

Transmembrane regions (helical) follow at residues 15-35, 40-60, 66-86, 116-136, and 184-204; these read ILLD…ILVS, SILY…LIGI, LYIL…LSLF, LFIL…NNIY, and ILLI…IVLT.

Belongs to the complex I subunit 6 family.

Its subcellular location is the mitochondrion membrane. It carries out the reaction a ubiquinone + NADH + 5 H(+)(in) = a ubiquinol + NAD(+) + 4 H(+)(out). In terms of biological role, core subunit of the mitochondrial membrane respiratory chain NADH dehydrogenase (Complex I) that is believed to belong to the minimal assembly required for catalysis. Complex I functions in the transfer of electrons from NADH to the respiratory chain. The immediate electron acceptor for the enzyme is believed to be ubiquinone. This is NADH-ubiquinone oxidoreductase chain 6 (ND6) from Wickerhamomyces canadensis (Yeast).